The following is a 612-amino-acid chain: Dihydroxy-acid dehydratase (612 aa).

Asp81 contacts Mg(2+). Residue Cys122 coordinates [2Fe-2S] cluster. 2 residues coordinate Mg(2+): Asp123 and Lys124. N6-carboxylysine is present on Lys124. Position 195 (Cys195) interacts with [2Fe-2S] cluster. A Mg(2+)-binding site is contributed by Glu491. Ser517 functions as the Proton acceptor in the catalytic mechanism.

This sequence belongs to the IlvD/Edd family. In terms of assembly, homodimer. [2Fe-2S] cluster is required as a cofactor. Requires Mg(2+) as cofactor.

It carries out the reaction (2R)-2,3-dihydroxy-3-methylbutanoate = 3-methyl-2-oxobutanoate + H2O. The enzyme catalyses (2R,3R)-2,3-dihydroxy-3-methylpentanoate = (S)-3-methyl-2-oxopentanoate + H2O. It functions in the pathway amino-acid biosynthesis; L-isoleucine biosynthesis; L-isoleucine from 2-oxobutanoate: step 3/4. It participates in amino-acid biosynthesis; L-valine biosynthesis; L-valine from pyruvate: step 3/4. Functionally, functions in the biosynthesis of branched-chain amino acids. Catalyzes the dehydration of (2R,3R)-2,3-dihydroxy-3-methylpentanoate (2,3-dihydroxy-3-methylvalerate) into 2-oxo-3-methylpentanoate (2-oxo-3-methylvalerate) and of (2R)-2,3-dihydroxy-3-methylbutanoate (2,3-dihydroxyisovalerate) into 2-oxo-3-methylbutanoate (2-oxoisovalerate), the penultimate precursor to L-isoleucine and L-valine, respectively. The protein is Dihydroxy-acid dehydratase of Sinorhizobium medicae (strain WSM419) (Ensifer medicae).